Consider the following 377-residue polypeptide: Protein FAM199X-B (377 aa).

The span at 240 to 254 shows a compositional bias: basic and acidic residues; that stretch reads KEHSPRQRCTRESWK. The tract at residues 240 to 350 is disordered; the sequence is KEHSPRQRCT…EQRQARKERI (111 aa). A compositionally biased stretch (low complexity) spans 256 to 301; it reads TSYSTASTSGVSGASVSSSSASMVSTASSTGSSGGNSASNSSANMS. Positions 319-338 are enriched in basic residues; sequence DSKKRSKQRKLQQKALRKRQ. The stretch at 321–349 forms a coiled coil; that stretch reads KKRSKQRKLQQKALRKRQLKEQRQARKER. Over residues 339 to 350 the composition is skewed to basic and acidic residues; it reads LKEQRQARKERI.

The protein belongs to the FAM199 family.

The chain is Protein FAM199X-B (fam199x-b) from Xenopus laevis (African clawed frog).